A 1522-amino-acid polypeptide reads, in one-letter code: Lysine-specific demethylase 5B (1522 aa).

Residues C10–P51 form the JmjN domain. In terms of domain architecture, ARID spans T75–S165. Residues D180–P192 are compositionally biased toward basic and acidic residues. The tract at residues D180 to R229 is disordered. The PHD-type 1 zinc-finger motif lies at L284–Q334. A 2-oxoglutarate-binding site is contributed by Y400. Positions E428 to R594 constitute a JmjC domain. Fe cation contacts are provided by H474 and E476. S482, N484, and K492 together coordinate 2-oxoglutarate. H562 lines the Fe cation pocket. The C5HC2 zinc-finger motif lies at C667–M719. Residues L1151–S1199 form a PHD-type 2 zinc finger. Positions L1353–N1365 are enriched in polar residues. Disordered stretches follow at residues L1353 to G1373 and A1400 to D1460. Positions A1400–S1416 are enriched in basic residues. Residues R1426–E1442 show a composition bias toward basic and acidic residues. The PHD-type 3 zinc finger occupies D1462–K1516.

Belongs to the JARID1 histone demethylase family. It depends on Fe(2+) as a cofactor.

Its subcellular location is the nucleus. It carries out the reaction N(6),N(6),N(6)-trimethyl-L-lysyl(4)-[histone H3] + 3 2-oxoglutarate + 3 O2 = L-lysyl(4)-[histone H3] + 3 formaldehyde + 3 succinate + 3 CO2. Histone demethylase that demethylates 'Lys-4' of histone H3, thereby playing a central role in histone code. Does not demethylate histone H3 'Lys-9' or H3 'Lys-27'. Demethylates trimethylated, dimethylated and monomethylated H3 'Lys-4'. Acts as a transcriptional corepressor. May repress the CLOCK-BMAL1 heterodimer-mediated transcriptional activation of the core clock component PER2. This Gallus gallus (Chicken) protein is Lysine-specific demethylase 5B (KDM5B).